A 139-amino-acid chain; its full sequence is Probable disulfide formation protein C (139 aa).

The helical transmembrane segment at 8-27 threads the bilayer; the sequence is EYALLTAWGASFIATLGSLY. Residues Cys-37 and Cys-40 are joined by a disulfide bond. The next 2 membrane-spanning stretches (helical) occupy residues 42–61 and 68–85; these read YQRI…VAKK and YSLP…YHYA. Residues Cys-99 and Cys-104 are joined by a disulfide bond. The chain crosses the membrane as a helical span at residues 113–135; the sequence is GFVTIPFLALIGFITIAVCSFIV.

This sequence belongs to the DsbB family. BdbC subfamily.

It is found in the cell membrane. Functionally, required for disulfide bond formation in some proteins. This chain is Probable disulfide formation protein C, found in Bacillus cereus (strain ATCC 14579 / DSM 31 / CCUG 7414 / JCM 2152 / NBRC 15305 / NCIMB 9373 / NCTC 2599 / NRRL B-3711).